We begin with the raw amino-acid sequence, 290 residues long: uncharacterized protein (290 aa).

The protein localises to the cell membrane. The protein resides in the membrane raft. This is an uncharacterized protein from Bacillus subtilis (strain 168).